The following is a 225-amino-acid chain: UPF0758 protein Shal_0429 (225 aa).

An MPN domain is found at 102-224 (ILSDPDLTRD…IVSFAERGWI (123 aa)). 3 residues coordinate Zn(2+): His173, His175, and Asp186. A JAMM motif motif is present at residues 173 to 186 (HNHPSGIAEPSTAD).

Belongs to the UPF0758 family.

The protein is UPF0758 protein Shal_0429 of Shewanella halifaxensis (strain HAW-EB4).